Reading from the N-terminus, the 409-residue chain is Nucleoprotein (409 aa).

4 disordered regions span residues 1–32, 46–69, 120–193, and 238–259; these read MASG…SSGN, SPPL…QQHG, GADT…SGAE, and VDQV…DKMN. Residues 15–31 are compositionally biased toward low complexity; sequence PVIKLGGPKPPKVGSSG. The interval 29-160 is RNA-binding; sequence SSGNASWFQA…GNFRWDFIPL (132 aa). The 126-residue stretch at 31–156 folds into the CoV N NTD domain; the sequence is GNASWFQAIK…GGPDGNFRWD (126 aa). Over residues 162-179 the composition is skewed to low complexity; the sequence is RGRSGKSTAASSAASSRA. 2 stretches are compositionally biased toward basic and acidic residues: residues 180 to 192 and 247 to 259; these read PSRE…RSGA and KGKE…DKMN. Ser190 carries the post-translational modification Phosphoserine; by host. In terms of domain architecture, CoV N CTD spans 215–331; that stretch reads TKAKADEMAH…QCVDGVGTRP (117 aa). Positions 226-333 are dimerization; that stretch reads RYCKRTIPPG…VDGVGTRPKD (108 aa). Cys320 and Cys323 are oxidised to a cystine. The interval 327–409 is disordered; it reads VGTRPKDDEP…GDSALGENEL (83 aa). A compositionally biased stretch (low complexity) spans 341–354; sequence RSSSRPATRTSSPA. The span at 358–367 shows a compositional bias: basic residues; that stretch reads PRPKKEKKTK. Basic and acidic residues predominate over residues 368–384; that stretch reads KQDDEVDKALTSDEERN. The residue at position 378 (Thr378) is a Phosphothreonine; by host. The residue at position 379 (Ser379) is a Phosphoserine; by host.

This sequence belongs to the gammacoronavirus nucleocapsid protein family. Homooligomer. Both monomeric and oligomeric forms interact with RNA. Interacts with protein M. Interacts with NSP3; this interaction serves to tether the genome to the newly translated replicase-transcriptase complex at a very early stage of infection. ADP-ribosylated. The ADP-ribosylation is retained in the virion during infection. In terms of processing, phosphorylated on serine and threonine residues.

Its subcellular location is the virion. The protein resides in the host endoplasmic reticulum-Golgi intermediate compartment. It localises to the host Golgi apparatus. Packages the positive strand viral genome RNA into a helical ribonucleocapsid (RNP) and plays a fundamental role during virion assembly through its interactions with the viral genome and membrane protein M. Plays an important role in enhancing the efficiency of subgenomic viral RNA transcription as well as viral replication. The protein is Nucleoprotein of Gallus gallus (Chicken).